Reading from the N-terminus, the 272-residue chain is NAD kinase (272 aa).

Asp-62 (proton acceptor) is an active-site residue. NAD(+)-binding positions include 62 to 63 (DG), Arg-67, 129 to 130 (NE), Arg-140, Lys-157, Asp-159, Ile-167, 170 to 175 (SSYSSS), Ala-194, and Gln-229.

It belongs to the NAD kinase family. A divalent metal cation serves as cofactor.

The protein localises to the cytoplasm. It catalyses the reaction NAD(+) + ATP = ADP + NADP(+) + H(+). Involved in the regulation of the intracellular balance of NAD and NADP, and is a key enzyme in the biosynthesis of NADP. Catalyzes specifically the phosphorylation on 2'-hydroxyl of the adenosine moiety of NAD to yield NADP. The polypeptide is NAD kinase (Thermoplasma acidophilum (strain ATCC 25905 / DSM 1728 / JCM 9062 / NBRC 15155 / AMRC-C165)).